The following is a 459-amino-acid chain: Glutamate--tRNA ligase 2 (459 aa).

Residues 8–18 (PSPTGYLHIGG) carry the 'HIGH' region motif. Residues 237–241 (KLSKR) carry the 'KMSKS' region motif. Lys-240 contacts ATP.

It belongs to the class-I aminoacyl-tRNA synthetase family. Glutamate--tRNA ligase type 1 subfamily. Monomer.

It is found in the cytoplasm. It carries out the reaction tRNA(Glu) + L-glutamate + ATP = L-glutamyl-tRNA(Glu) + AMP + diphosphate. Functionally, catalyzes the attachment of glutamate to tRNA(Glu) in a two-step reaction: glutamate is first activated by ATP to form Glu-AMP and then transferred to the acceptor end of tRNA(Glu). The sequence is that of Glutamate--tRNA ligase 2 from Campylobacter curvus (strain 525.92).